We begin with the raw amino-acid sequence, 149 residues long: 3-hydroxyacyl-[acyl-carrier-protein] dehydratase FabZ (149 aa).

His53 is an active-site residue.

The protein belongs to the thioester dehydratase family. FabZ subfamily.

Its subcellular location is the cytoplasm. It carries out the reaction a (3R)-hydroxyacyl-[ACP] = a (2E)-enoyl-[ACP] + H2O. Involved in unsaturated fatty acids biosynthesis. Catalyzes the dehydration of short chain beta-hydroxyacyl-ACPs and long chain saturated and unsaturated beta-hydroxyacyl-ACPs. The protein is 3-hydroxyacyl-[acyl-carrier-protein] dehydratase FabZ of Neisseria meningitidis serogroup C / serotype 2a (strain ATCC 700532 / DSM 15464 / FAM18).